The chain runs to 245 residues: MAPK-interacting and spindle-stabilizing protein-like (245 aa).

The segment at methionine 1–histidine 245 is disordered. An N-acetylserine modification is found at serine 2. Phosphoserine occurs at positions 2, 6, and 15. Residues alanine 17–lysine 26 are compositionally biased toward polar residues. Low complexity predominate over residues tryptophan 34 to serine 51. Composition is skewed to pro residues over residues serine 74–proline 127, proline 164–proline 190, and alanine 198–alanine 207.

It belongs to the MISS family.

In Homo sapiens (Human), this protein is MAPK-interacting and spindle-stabilizing protein-like (MAPK1IP1L).